The following is a 90-amino-acid chain: Putative membrane protein insertion efficiency factor (90 aa).

Positions 68–90 are disordered; that stretch reads VPAHFSLRRNPQYKEEDHRGKKR. Residues 79–90 are compositionally biased toward basic and acidic residues; sequence QYKEEDHRGKKR.

This sequence belongs to the UPF0161 family.

The protein localises to the cell membrane. Its function is as follows. Could be involved in insertion of integral membrane proteins into the membrane. The polypeptide is Putative membrane protein insertion efficiency factor (Lactiplantibacillus plantarum (strain ATCC BAA-793 / NCIMB 8826 / WCFS1) (Lactobacillus plantarum)).